A 356-amino-acid chain; its full sequence is CX3C chemokine receptor 1 (356 aa).

At 1–26 the chain is on the extracellular side; the sequence is MTTLYSDWATESFEYDESSEACFIGD. The chain crosses the membrane as a helical span at residues 27-47; the sequence is IVAFGTIFLSIFYSLVFAFGL. Topologically, residues 48 to 68 are cytoplasmic; it reads VGNLLVVCALTSSRKPKSITD. The chain crosses the membrane as a helical span at residues 69–89; that stretch reads IYLLNLALSDLLFVATLPFWT. Topologically, residues 90-105 are extracellular; that stretch reads HYVISEQGFHNAVCKL. The cysteines at positions 103 and 176 are disulfide-linked. A helical transmembrane segment spans residues 106–126; it reads TTALFFIGFFGGIFFITVISI. Topologically, residues 127-147 are cytoplasmic; it reads DRYMAIVLAANSINNRTVQHG. A helical transmembrane segment spans residues 148 to 168; the sequence is VTTSLGVWAAAILVAAPQFMF. Residues 169–195 lie on the Extracellular side of the membrane; sequence TKQKGNECLGDYPEVLQDIWPVLRNTE. Residues 196 to 216 traverse the membrane as a helical segment; the sequence is ANFLGFLLPVLIMSYCYFRII. The Cytoplasmic portion of the chain corresponds to 217 to 232; sequence QTLFSCKNHKKAKAIK. A helical transmembrane segment spans residues 233 to 253; that stretch reads LILLVVIVFFLFWTPYNVMIF. The Extracellular segment spans residues 254–277; the sequence is LETLKLYGFFPNCDMKRDLRLALS. Residues 278–298 form a helical membrane-spanning segment; sequence VTETVAFSHCCLNPLIYAFAG. Residues 299–356 are Cytoplasmic-facing; it reads QKFRRYLRHLSRKCQAVLCGRPVHVSFSPSESQRSRQESIVSSNFTHYTSDGDASLLL. Thr347 is subject to Phosphothreonine.

The protein belongs to the G-protein coupled receptor 1 family. Found in a ternary complex with CX3CL1 and ITGAV:ITGB3 or ITGA4:ITGB1. In terms of processing, this protein is not N-glycosylated which is unusual for G-protein-coupled receptors.

It is found in the cell membrane. Receptor for the C-X3-C chemokine fractalkine (CX3CL1) present on many early leukocyte cells; CX3CR1-CX3CL1 signaling exerts distinct functions in different tissue compartments, such as immune response, inflammation, cell adhesion and chemotaxis. CX3CR1-CX3CL1 signaling mediates cell migratory functions. Responsible for the recruitment of natural killer (NK) cells to inflamed tissues. Acts as a regulator of inflammation process leading to atherogenesis by mediating macrophage and monocyte recruitment to inflamed atherosclerotic plaques, promoting cell survival. Involved in airway inflammation by promoting interleukin 2-producing T helper (Th2) cell survival in inflamed lung. Involved in the migration of circulating monocytes to non-inflamed tissues, where they differentiate into macrophages and dendritic cells. Acts as a negative regulator of angiogenesis, probably by promoting macrophage chemotaxis. Plays a key role in brain microglia by regulating inflammatory response in the central nervous system (CNS) and regulating synapse maturation. Required to restrain the microglial inflammatory response in the CNS and the resulting parenchymal damage in response to pathological stimuli. Involved in brain development by participating in synaptic pruning, a natural process during which brain microglia eliminates extra synapses during postnatal development. Synaptic pruning by microglia is required to promote the maturation of circuit connectivity during brain development. Acts as an important regulator of the gut microbiota by controlling immunity to intestinal bacteria and fungi. Expressed in lamina propria dendritic cells in the small intestine, which form transepithelial dendrites capable of taking up bacteria in order to provide defense against pathogenic bacteria. Required to initiate innate and adaptive immune responses against dissemination of commensal fungi (mycobiota) component of the gut: expressed in mononuclear phagocytes (MNPs) and acts by promoting induction of antifungal IgG antibodies response to confer protection against disseminated C.albicans or C.auris infection. Also acts as a receptor for C-C motif chemokine CCL26, inducing cell chemotaxis. The chain is CX3C chemokine receptor 1 from Oryctolagus cuniculus (Rabbit).